The sequence spans 358 residues: Peptide chain release factor 1 (358 aa).

Gln-233 carries the post-translational modification N5-methylglutamine.

The protein belongs to the prokaryotic/mitochondrial release factor family. In terms of processing, methylated by PrmC. Methylation increases the termination efficiency of RF1.

The protein localises to the cytoplasm. Its function is as follows. Peptide chain release factor 1 directs the termination of translation in response to the peptide chain termination codons UAG and UAA. The sequence is that of Peptide chain release factor 1 from Staphylococcus haemolyticus (strain JCSC1435).